The sequence spans 262 residues: MMNNSITLLLALLVGLVGFAFTNKKRALVREDFLPPMSFKVDRVAAPNQKFADCNMFWSVPKSPLLAATTSAATPTAQQQQQDGGVSALDPLLTADGDASQPIVYDRFIYANKKSRLRQHGDPIRGDLPIIPHNSDWFRPSVTPHLDLKEGALQAIGGFDNGTNNQLSALMNASAGNALQTFGGAAFSGPGGLASNLGLAGPQQPLVSQPPMTGSLPARYMSALPYGSNLMTGQTATGMIPQYTAQKLVHVDRAGDVQVLRS.

An N-terminal signal peptide occupies residues 1 to 22 (MMNNSITLLLALLVGLVGFAFT).

Belongs to the IIV-6 117L family.

This is an uncharacterized protein from Aedes vexans (Inland floodwater mosquito).